The chain runs to 331 residues: Mitochondrial respiration co-chaperone MRJ1 (331 aa).

Residues 1-36 (MLSFQATVRPLAVSSRLHSPAAHIWRRNAHTAAMSD) constitute a mitochondrion transit peptide. The tract at residues 35-66 (SDDSLDQGSSSSYGDSASQPHLGKGKGRQDSL) is disordered. Positions 40–53 (DQGSSSSYGDSASQ) are enriched in low complexity. The 65-residue stretch at 83–147 (DPFEVMALDR…SSRSAFLKTG (65 aa)) folds into the J domain. Positions 203–226 (DGSQGWRPYEDPSKGFSPPTSGPA) are disordered. Positions 275 to 303 (RALAQARYEAATHGHIRREQIRRRVREAE) constitute an IQ domain.

This sequence belongs to the DnaJ family. Interacts with QCR2.

It localises to the mitochondrion. Its function is as follows. Mitochondrial co-chaperone required for ubiquinol-cytochrome c oxidoreductase (mitochondrial respiratory chain complex III) activity. The chain is Mitochondrial respiration co-chaperone MRJ1 from Cryptococcus neoformans var. grubii serotype A (strain H99 / ATCC 208821 / CBS 10515 / FGSC 9487) (Filobasidiella neoformans var. grubii).